Reading from the N-terminus, the 179-residue chain is MPMAKKLNISRINELKTNAYDNIESYDDPDTPKALEQFTSQIKKVLQADPKMLESVPEYLPVALYGRVKFPSDAKLKWAHWINTATQPDWDEFKVTIGFNNADLPLVLAVRAYSEDLLIESCAVLYLLENQGKATPAPKRSADDDFEDEDSDYADYSDDDDDEGEEEDGYYDHYDDEDR.

The tract at residues 133–179 (KATPAPKRSADDDFEDEDSDYADYSDDDDDEGEEEDGYYDHYDDEDR) is disordered. Acidic residues predominate over residues 144-179 (DDFEDEDSDYADYSDDDDDEGEEEDGYYDHYDDEDR).

Functionally, part of an operon involved in cold adaptation. This Shewanella oneidensis (strain ATCC 700550 / JCM 31522 / CIP 106686 / LMG 19005 / NCIMB 14063 / MR-1) protein is Adaptation to cold protein A.